The primary structure comprises 296 residues: Ribose import binding protein RbsB (296 aa).

An N-terminal signal peptide occupies residues 1 to 25 (MNMKKLATLVSAVALSATVSANAMA).

The protein belongs to the bacterial solute-binding protein 2 family. The complex is composed of an ATP-binding protein (RbsA), two transmembrane proteins (RbsC) and a solute-binding protein (RbsB).

Its subcellular location is the periplasm. In terms of biological role, part of the ABC transporter complex RbsABC involved in ribose import. Binds ribose. The chain is Ribose import binding protein RbsB (rbsB) from Salmonella typhi.